A 268-amino-acid polypeptide reads, in one-letter code: uncharacterized protein (268 aa).

To yeast YKR075c.

This is an uncharacterized protein from Saccharomyces cerevisiae (strain ATCC 204508 / S288c) (Baker's yeast).